The following is a 319-amino-acid chain: Taste receptor type 2 member 39 (319 aa).

At 1-16 the chain is on the extracellular side; the sequence is MAQPSNYWKQDLLPLS. The chain crosses the membrane as a helical span at residues 17–37; it reads ILILTLVATECTIGIIASGII. At 38-56 the chain is on the cytoplasmic side; that stretch reads TVVNAVSWVQKRAVSITTR. The chain crosses the membrane as a helical span at residues 57–77; the sequence is ILLLLSVSRIGLQSIILIEMT. Over 78-97 the chain is Extracellular; the sequence is SSIFNFSSYNSVLYRVSRVS. N-linked (GlcNAc...) asparagine glycosylation occurs at asparagine 82. A helical membrane pass occupies residues 98–118; sequence FVFLNYCSLWFAALLSFFHFV. The Cytoplasmic portion of the chain corresponds to 119–137; sequence KIANFSYPLFFKLKWRISE. The chain crosses the membrane as a helical span at residues 138 to 158; that stretch reads LMPWLLWLSVFISFSSSMFFC. Residues 159–187 lie on the Extracellular side of the membrane; it reads NHKYTVYNNISLSSNICNFTMELYVAEAN. Asparagine 167 and asparagine 176 each carry an N-linked (GlcNAc...) asparagine glycan. Residues 188 to 208 traverse the membrane as a helical segment; sequence VVNVAFLFSFGILPPLTMFIA. At 209–247 the chain is on the cytoplasmic side; that stretch reads TATLLIFSLRRHTLHMRNGDADSRNPRVEAHKQAIKETS. Residues 248–268 form a helical membrane-spanning segment; the sequence is CFLFLYILYAAVLFLSTSNIA. Residues 269–273 are Extracellular-facing; sequence DASLF. The chain crosses the membrane as a helical span at residues 274–294; sequence WSSVLRISLPVYPAGHSVLLI. Residues 295–319 lie on the Cytoplasmic side of the membrane; it reads QSNPGLKRTWKQLLSQIHLHLQSRY.

This sequence belongs to the G-protein coupled receptor T2R family.

It is found in the membrane. Its function is as follows. Putative taste receptor which may play a role in the perception of bitterness. In Rattus norvegicus (Rat), this protein is Taste receptor type 2 member 39.